The chain runs to 66 residues: MSGKKSGLPDGRIPDRLPDGRPAVAWRSRWTEGTLPLWLVATAGGMAVLFVVGLFFYGSYTGVGSA.

Residues 37–57 traverse the membrane as a helical segment; the sequence is LWLVATAGGMAVLFVVGLFFY.

It belongs to the PsbJ family. PSII is composed of 1 copy each of membrane proteins PsbA, PsbB, PsbC, PsbD, PsbE, PsbF, PsbH, PsbI, PsbJ, PsbK, PsbL, PsbM, PsbT, PsbX, PsbY, PsbZ, Psb30/Ycf12, peripheral proteins PsbO, CyanoQ (PsbQ), PsbU, PsbV and a large number of cofactors. It forms dimeric complexes.

The protein resides in the cellular thylakoid membrane. In terms of biological role, one of the components of the core complex of photosystem II (PSII). PSII is a light-driven water:plastoquinone oxidoreductase that uses light energy to abstract electrons from H(2)O, generating O(2) and a proton gradient subsequently used for ATP formation. It consists of a core antenna complex that captures photons, and an electron transfer chain that converts photonic excitation into a charge separation. In Synechococcus sp. (strain WH7803), this protein is Photosystem II reaction center protein J.